The primary structure comprises 126 residues: C-type natriuretic peptide (126 aa).

A signal peptide spans 1-23 (MHLSQLLACALLLTLLSLRPSEA). Residues 20 to 71 (PSEAKPGAPPKVPRTPPAEELAEPQAAGGGQKKGDKAPGGGGANLKGDRSRL) form a disordered region. The propeptide occupies 24-73 (KPGAPPKVPRTPPAEELAEPQAAGGGQKKGDKAPGGGGANLKGDRSRLLR). A compositionally biased stretch (pro residues) spans 26-35 (GAPPKVPRTP). A compositionally biased stretch (gly residues) spans 46 to 63 (AGGGQKKGDKAPGGGGAN). A disulfide bond links Cys-110 and Cys-126.

Belongs to the natriuretic peptide family. In terms of processing, degraded by IDE (in vitro). As to expression, in the kidney, predominantly expressed in the distal tubular cells (at protein level).

It localises to the secreted. In terms of biological role, hormone which plays a role in endochondral ossification through regulation of cartilaginous growth plate chondrocytes proliferation and differentiation. May also be vasoactive and natriuretic. Acts by specifically binding and stimulating NPR2 to produce cGMP. Binds the clearance receptor NPR3. In Homo sapiens (Human), this protein is C-type natriuretic peptide (NPPC).